A 601-amino-acid polypeptide reads, in one-letter code: Zinc finger protein 37 (601 aa).

The 70-residue stretch at 1-70 folds into the KRAB domain; sequence MATPEPAESD…VRANKNSSSS (70 aa). Thr3 bears the Phosphothreonine mark. The residue at position 9 (Ser9) is a Phosphoserine. Residues 30 to 43 show a composition bias toward polar residues; sequence ETCSNPASMGNQDP. A disordered region spans residues 30-254; sequence ETCSNPASMG…SKSDKAPGSG (225 aa). The segment covering 60 to 70 has biased composition (low complexity); sequence SVRANKNSSSS. Polar residues predominate over residues 77–88; sequence TGTSAKVQQDGA. Composition is skewed to basic and acidic residues over residues 115 to 136, 164 to 174, and 183 to 238; these read KSSE…PSEK, KKPDTANEYRK, and VNRD…EKRK. A C2H2-type 1 zinc finger spans residues 257 to 279; the sequence is YECNQCGKVLSHKQGLLDHQRTH. The C2H2-type 2; atypical zinc-finger motif lies at 285–303; the sequence is YECYECGIAFSQKSHLVVH. 10 consecutive C2H2-type zinc fingers follow at residues 314–337, 343–365, 371–393, 399–421, 427–449, 455–477, 483–505, 511–533, 539–561, and 570–592; these read YECV…RISH, YKCN…IRSH, YECK…VRTH, YECN…MRIH, FECT…QRTH, YKCK…MRTH, FECN…QRVH, YECV…QRTH, FECY…QRSH, and YECV…MKTH.

It belongs to the krueppel C2H2-type zinc-finger protein family. In terms of tissue distribution, expressed in testes, brain, kidney, spleen, thymus, lung, and at low levels in liver.

The protein localises to the nucleus. In terms of biological role, may be involved in transcriptional regulation. The chain is Zinc finger protein 37 (Zfp37) from Rattus norvegicus (Rat).